Here is a 486-residue protein sequence, read N- to C-terminus: Glutamyl-tRNA(Gln) amidotransferase subunit A (486 aa).

Residues lysine 75 and serine 150 each act as charge relay system in the active site. Serine 174 functions as the Acyl-ester intermediate in the catalytic mechanism.

Belongs to the amidase family. GatA subfamily. In terms of assembly, heterotrimer of A, B and C subunits.

The catalysed reaction is L-glutamyl-tRNA(Gln) + L-glutamine + ATP + H2O = L-glutaminyl-tRNA(Gln) + L-glutamate + ADP + phosphate + H(+). Allows the formation of correctly charged Gln-tRNA(Gln) through the transamidation of misacylated Glu-tRNA(Gln) in organisms which lack glutaminyl-tRNA synthetase. The reaction takes place in the presence of glutamine and ATP through an activated gamma-phospho-Glu-tRNA(Gln). The polypeptide is Glutamyl-tRNA(Gln) amidotransferase subunit A (Nostoc sp. (strain PCC 7120 / SAG 25.82 / UTEX 2576)).